A 447-amino-acid chain; its full sequence is Ion-translocating oxidoreductase complex subunit C (447 aa).

4Fe-4S ferredoxin-type domains follow at residues 359–389 (AEVL…GRIA) and 399–430 (RCRE…LIRY). [4Fe-4S] cluster is bound by residues cysteine 369, cysteine 372, cysteine 375, cysteine 379, cysteine 408, cysteine 411, cysteine 414, and cysteine 418.

This sequence belongs to the 4Fe4S bacterial-type ferredoxin family. RnfC subfamily. The Rnf complex is probably composed of eight subunits, including RnfA, RnfB, RnfC, RnfD, RnfE and RnfG. [4Fe-4S] cluster serves as cofactor.

Its subcellular location is the cell membrane. Part of a membrane-bound complex that couples electron transfer with translocation of ions across the membrane. Catalyzes Na(+) transport, most probably coupled to electron transfer from reduced ferredoxin to methanophenazine and heterodisulfide reductase. Involved in heterodisulfide reduction during methanogenesis from acetate. This chain is Ion-translocating oxidoreductase complex subunit C, found in Methanosarcina acetivorans (strain ATCC 35395 / DSM 2834 / JCM 12185 / C2A).